A 146-amino-acid chain; its full sequence is Large ribosomal subunit protein uL14 (146 aa).

The protein belongs to the universal ribosomal protein uL14 family.

This chain is Large ribosomal subunit protein uL14 (RPL23), found in Encephalitozoon cuniculi (strain GB-M1) (Microsporidian parasite).